The chain runs to 251 residues: Pyruvate formate-lyase-activating enzyme (251 aa).

The Radical SAM core domain maps to 15–244; sequence VDGPGLRYIL…KAAYRYVNFK (230 aa). [4Fe-4S] cluster contacts are provided by cysteine 29, cysteine 33, and cysteine 36. S-adenosyl-L-methionine contacts are provided by residues 35-37, glycine 79, 134-136, and histidine 207; these read YCH and DIK.

This sequence belongs to the organic radical-activating enzymes family. The cofactor is [4Fe-4S] cluster.

Its subcellular location is the cytoplasm. It catalyses the reaction glycyl-[formate C-acetyltransferase] + reduced [flavodoxin] + S-adenosyl-L-methionine = glycin-2-yl radical-[formate C-acetyltransferase] + semiquinone [flavodoxin] + 5'-deoxyadenosine + L-methionine + H(+). Functionally, activation of pyruvate formate-lyase under anaerobic conditions by generation of an organic free radical, using S-adenosylmethionine and reduced flavodoxin as cosubstrates to produce 5'-deoxy-adenosine. The sequence is that of Pyruvate formate-lyase-activating enzyme (pflA) from Staphylococcus aureus (strain N315).